Consider the following 242-residue polypeptide: MKIITFSHYKEVTDDVLKDSYAVVIDLLRATSTMIWAISNGAKGIIPVEDISEARLLKRLDESVLLGGERGGLKIEGFDLDNSPLSYKKEAIFGKTVVMTTTNGTRALKKASCAKRIFLGSFINAKKTAEYIMKETLHYNIDTISIVCAGTEEKFTLEDILCAGYFVDLFIENFPDVFLDDLSLASHVLYKKFENDPHEILKYSYHYNHLKKLGFEADLEFCLRKDFVDCVCEFRNLVVEKV.

The protein belongs to the ComB family. Mg(2+) serves as cofactor.

The enzyme catalyses (2R)-O-phospho-3-sulfolactate + H2O = (2R)-3-sulfolactate + phosphate. The chain is Probable 2-phosphosulfolactate phosphatase from Caldicellulosiruptor saccharolyticus (strain ATCC 43494 / DSM 8903 / Tp8T 6331).